Here is an 808-residue protein sequence, read N- to C-terminus: Protein SEY1 (808 aa).

Positions 1 to 21 (MSSELSEGELSHTSSSSSFVP) are disordered. Topologically, residues 1–701 (MSSELSEGEL…KRSIVQHITQ (701 aa)) are cytoplasmic. A GB1/RHD3-type G domain is found at 57 to 286 (GNNYHIISVF…VGDELFKPEY (230 aa)). 67–74 (GSQSTGKS) is a GTP binding site. The chain crosses the membrane as a helical span at residues 702–722 (IPYYIYLVIVFLGWNEFMAII). Topologically, residues 723-725 (RNP) are lumenal. A helical membrane pass occupies residues 726–746 (LLFSLALLLGASVYILYKLNL). Residues 747-808 (LKPAIVVAQR…YSDNIELDDM (62 aa)) are Cytoplasmic-facing.

The protein belongs to the TRAFAC class dynamin-like GTPase superfamily. GB1/RHD3 GTPase family. RHD3 subfamily.

The protein resides in the endoplasmic reticulum membrane. Functionally, cooperates with the reticulon proteins and tubule-shaping DP1 family proteins to generate and maintain the structure of the tubular endoplasmic reticulum network. Has GTPase activity, which is required for its function in ER organization. This is Protein SEY1 from Candida tropicalis (strain ATCC MYA-3404 / T1) (Yeast).